The primary structure comprises 203 residues: Translation initiation factor IF-3 (203 aa).

Residues 168-203 are disordered; sequence QLSPKKKESATKKPATPKPATPAAVKAEKPAGDNEE. A compositionally biased stretch (basic and acidic residues) spans 193-203; the sequence is KAEKPAGDNEE.

The protein belongs to the IF-3 family. In terms of assembly, monomer.

It localises to the cytoplasm. Functionally, IF-3 binds to the 30S ribosomal subunit and shifts the equilibrium between 70S ribosomes and their 50S and 30S subunits in favor of the free subunits, thus enhancing the availability of 30S subunits on which protein synthesis initiation begins. The sequence is that of Translation initiation factor IF-3 from Bacteroides fragilis (strain ATCC 25285 / DSM 2151 / CCUG 4856 / JCM 11019 / LMG 10263 / NCTC 9343 / Onslow / VPI 2553 / EN-2).